Consider the following 212-residue polypeptide: 3-isopropylmalate dehydratase small subunit (212 aa).

The protein belongs to the LeuD family. LeuD type 1 subfamily. Heterodimer of LeuC and LeuD.

The catalysed reaction is (2R,3S)-3-isopropylmalate = (2S)-2-isopropylmalate. The protein operates within amino-acid biosynthesis; L-leucine biosynthesis; L-leucine from 3-methyl-2-oxobutanoate: step 2/4. Catalyzes the isomerization between 2-isopropylmalate and 3-isopropylmalate, via the formation of 2-isopropylmaleate. This Nitrosomonas eutropha (strain DSM 101675 / C91 / Nm57) protein is 3-isopropylmalate dehydratase small subunit.